We begin with the raw amino-acid sequence, 619 residues long: MSGLVLGQRDEPAGHRLSQEEILGSTKVVSQGLEALHSEHQAVLQSLSHTIECLQQGGHEEGLVHEKARQLRRSMENIELGLSEAQVMLALASHLSTVESEKQKLRAQVRRLCQENQWLRDELAGTQQRLQRSEQAVAQLEEEKKHLEFLRQLRQYDEDGHGMEEKEGEATKDSLDDLFPNEEEEDSGNDLSRGQGAAAAQQGGYEIPARLRTLHNLVIQYAAQGRYEVAVPLCKQALEDLERTSGRGHPDVATMLNILALVYRDQNKYKEAAHLLNDALSIRESTLGRDHPAVAATLNNLAVLYGKRGKYKEAEPLCQRALEIREKVLGTDHPDVAKQLNNLALLCQNQGKYEAVERYYQRALAIYESQLGPDNPNVARTKNNLASCYLKQGKYSEAEALYKEILTCAHVQEFGSVDDDHKPIWMHAEEREEMSRSRPRDSSAPYAEYGGWYKACRVSSPTVNTTLKNLGALYRRQGKLEAAETLEECALRSRKQGTDPISQTKVAELLGEGDGRKAIQEGPGDSVKFEGGEDASVAVEWSGDGSGTLQRSGSLGKIRDVLRRSSELLVRKLQGTEPRPSSSSMKRAASLNYLNQPNAAPLQVSRGLSASTVDLSSSS.

N-acetylserine is present on Ser-2. Residues 55–88 (QQGGHEEGLVHEKARQLRRSMENIELGLSEAQVM) form a TPR 1 repeat. Residues 65–155 (HEKARQLRRS…HLEFLRQLRQ (91 aa)) are a coiled coil. The span at 156–175 (YDEDGHGMEEKEGEATKDSL) shows a compositional bias: basic and acidic residues. The interval 156–199 (YDEDGHGMEEKEGEATKDSLDDLFPNEEEEDSGNDLSRGQGAAA) is disordered. Position 174 is a phosphoserine (Ser-174). Residues 179-188 (FPNEEEEDSG) show a composition bias toward acidic residues. 5 TPR repeats span residues 211–244 (LRTL…LERT), 253–286 (ATML…REST), 295–328 (AATL…REKV), 337–370 (AKQL…YESQ), and 379–412 (ARTK…AHVQ). Ser-460 carries the post-translational modification Phosphoserine. A TPR 7 repeat occupies 464 to 497 (NTTLKNLGALYRRQGKLEAAETLEECALRSRKQG). A phosphoserine mark is found at Ser-565, Ser-566, and Ser-590. Residues 571–619 (RKLQGTEPRPSSSSMKRAASLNYLNQPNAAPLQVSRGLSASTVDLSSSS) form a disordered region. The span at 609–619 (SASTVDLSSSS) shows a compositional bias: low complexity. Position 612 is a phosphothreonine (Thr-612).

It belongs to the kinesin light chain family. Oligomeric complex composed of two heavy chains and two light chains.

Its subcellular location is the cytoplasm. The protein localises to the cytoskeleton. Kinesin is a microtubule-associated force-producing protein that may play a role in organelle transport. The light chain may function in coupling of cargo to the heavy chain or in the modulation of its ATPase activity. This is Kinesin light chain 4 (Klc4) from Mus musculus (Mouse).